The chain runs to 410 residues: MAAEIHSRPQSSRPVLLSKIEGHQDAVTAALLIPKEDGVITASEDRTIRVWLKRDSGQYWPSIYHTMASPCSAMAYHHDSRRIFVGQDNGAVMEFHVSEDFNKMNFIKTYPAHQNRVTAIIFSLATEWVISTGHDKCVSWMCTRSGNMLGRHFFSSWASCLQYDFDTQYAFVGDYSGQITLLKLEQSTCSVITTLKGHEGSIACLWWDPIQRLLFSGASDNSVIMWDIGGRKGRTLLLQGHHDRVQALCYLQLTRQLVSCSSDGGIAVWNMDVSREEAPQWLESDSCQKCEQPFFWNIKQMWDTKTLGLRQHHCRKCGQAVCGKCSSKRSSYPVMGFEFQVRVCDSCYDSIKDEDRTSLATFHEGKHNISHMSMDVARGLMVTCGTDRVVKIWDMTPVVGCSLATGFSPH.

WD repeat units lie at residues 22–61 (GHQD…QYWP), 66–105 (TMAS…NKMN), 112–150 (AHQN…NMLG), 153–192 (FFSS…CSVI), 197–236 (GHEG…GRTL), and 240–279 (GHHD…EEAP). An FYVE-type zinc finger spans residues 281–352 (WLESDSCQKC…VCDSCYDSIK (72 aa)). Zn(2+)-binding residues include Cys287, Cys290, Cys314, Cys317, Cys322, Cys325, Cys344, and Cys347. The WD 7 repeat unit spans residues 364-403 (EGKHNISHMSMDVARGLMVTCGTDRVVKIWDMTPVVGCSL). At Ser408 the chain carries Phosphoserine.

In terms of assembly, binds PtdIns3P in vitro with high specificity over other phosphoinositides. Interacts (via WD repeat 2) with tyrosine-phosphorylated TLR3 (via TIR domain) in response to poly(I:C). Interacts with TLR4 in response to LPS. Interacts with TICAM1 in response to poly(I:C).

It is found in the early endosome. In terms of biological role, positively regulates TLR3- and TLR4-mediated signaling pathways by bridging the interaction between TLR3 or TLR4 and TICAM1. Promotes TLR3/4 ligand-induced activation of transcription factors IRF3 and NF-kappa-B, as well as the production of IFN-beta and inflammatory cytokines. The polypeptide is WD repeat and FYVE domain-containing protein 1 (WDFY1) (Bos taurus (Bovine)).